Reading from the N-terminus, the 488-residue chain is Mannosylglycerate hydrolase MGH2 (488 aa).

Residues Tyr-94, 98-101, Tyr-146, Gln-167, and Gly-227 contribute to the substrate site; that span reads WNWD. The Proton donor role is filled by Asp-229. Substrate-binding positions include Arg-262 and 415-416; that span reads YW. Glu-459 functions as the Proton acceptor in the catalytic mechanism.

It belongs to the glycosyl hydrolase 63 family.

The catalysed reaction is (2R)-2-O-(alpha-D-mannosyl)-glycerate + H2O = D-mannose + (R)-glycerate. The enzyme catalyses (2R)-2-O-(alpha-D-glucopyranosyl)-glycerate + H2O = (R)-glycerate + D-glucose. Its activity is regulated as follows. Activity is not dependent on divalent cations, but it is enhanced by Mn(2+). Its function is as follows. Catalyzes the hydrolysis of alpha-D-mannosyl-glycerate (MG) to D-glycerate and D-mannose. Can also hydrolyze alpha-D-glucopyranosyl-glycerate (GG)with lower efficiency. The protein is Mannosylglycerate hydrolase MGH2 of Selaginella moellendorffii (Spikemoss).